Consider the following 368-residue polypeptide: Protein L-Myc (368 aa).

Disordered stretches follow at residues 39–79 (PPTS…RGHS), 112–179 (RLAP…EKRR), and 218–295 (FPPE…FLER). Residues 135 to 147 (LEASNPAPATQCQ) are compositionally biased toward polar residues. A compositionally biased stretch (acidic residues) spans 247–258 (EEEEEEEEEEEI). The segment covering 283 to 294 (DVTKRKNHNFLE) has biased composition (basic and acidic residues). The bHLH domain maps to 285–337 (TKRKNHNFLERKRRNDLRSRFLALRDQVPTLASCSKAPKVVILSKALEYLQAL). The interval 337 to 365 (LVGAEKKMATEKRQLRCRQQQLQKRIAYL) is leucine-zipper.

In terms of assembly, efficient DNA binding requires dimerization with another bHLH protein. Binds DNA as a heterodimer with MAX.

It is found in the nucleus. The protein is Protein L-Myc (Mycl) of Mus musculus (Mouse).